Consider the following 636-residue polypeptide: 3-phosphoinositide-dependent protein kinase 1 (636 aa).

Composition is skewed to low complexity over residues 1–20 (MEDL…NNDT) and 27–37 (APTTLNLTPTA). Residues 1–45 (MEDLTPTNTSLDTTTTNNDTTSDREAAPTTLNLTPTASESENSLS) are disordered. In terms of domain architecture, Protein kinase spans 69–364 (FMFLQSMGEG…SQELMAHKFF (296 aa)). ATP is bound by residues 79-81 (AYS) and Lys-98. The segment at 100–149 (LQKSYLNRHQKMDAIIREKNILTYLSQECGGHPFVTQLYTHFHDQARIYF) is PIF-pocket. ATP is bound by residues 152 to 154 (GLV) and Asp-158. Catalysis depends on Asp-197, which acts as the Proton acceptor. Positions 201 and 215 each coordinate ATP. 2 disordered regions span residues 233–264 (TDAN…EENT) and 593–636 (KKSR…KKSP). Residues 550–631 (DLEKKADEWC…QVSKKLSMQM (82 aa)) adopt a coiled-coil conformation. Basic and acidic residues predominate over residues 597–624 (KEMMREQKALRRKQEKEEKKALKAEQVS).

The protein belongs to the protein kinase superfamily. AGC Ser/Thr protein kinase family. PDPK1 subfamily. In terms of assembly, interacts directly with sgk-1, akt-1 and akt-2.

It localises to the cytoplasm. It catalyses the reaction L-seryl-[protein] + ATP = O-phospho-L-seryl-[protein] + ADP + H(+). It carries out the reaction L-threonyl-[protein] + ATP = O-phospho-L-threonyl-[protein] + ADP + H(+). In terms of biological role, involved in the daf-2/insulin receptor-like transduction pathway, which controls longevity and prevents developmental arrest at the dauer stage. Phosphorylates and activates sgk-1, akt-1 and akt-2. The polypeptide is 3-phosphoinositide-dependent protein kinase 1 (Caenorhabditis elegans).